The sequence spans 403 residues: 4-hydroxy-3-methylbut-2-en-1-yl diphosphate synthase (flavodoxin) (403 aa).

The segment covering 1–16 (MNTENPIEKPFRKTGD) has biased composition (basic and acidic residues). A disordered region spans residues 1–31 (MNTENPIEKPFRKTGDPVDLTSESPLHPRRK). Residues cysteine 291, cysteine 294, cysteine 326, and glutamate 333 each coordinate [4Fe-4S] cluster.

It belongs to the IspG family. [4Fe-4S] cluster serves as cofactor.

The enzyme catalyses (2E)-4-hydroxy-3-methylbut-2-enyl diphosphate + oxidized [flavodoxin] + H2O + 2 H(+) = 2-C-methyl-D-erythritol 2,4-cyclic diphosphate + reduced [flavodoxin]. Its pathway is isoprenoid biosynthesis; isopentenyl diphosphate biosynthesis via DXP pathway; isopentenyl diphosphate from 1-deoxy-D-xylulose 5-phosphate: step 5/6. In terms of biological role, converts 2C-methyl-D-erythritol 2,4-cyclodiphosphate (ME-2,4cPP) into 1-hydroxy-2-methyl-2-(E)-butenyl 4-diphosphate. The sequence is that of 4-hydroxy-3-methylbut-2-en-1-yl diphosphate synthase (flavodoxin) from Bifidobacterium longum (strain NCC 2705).